Consider the following 164-residue polypeptide: NADH-quinone oxidoreductase subunit B (164 aa).

4 residues coordinate [4Fe-4S] cluster: C38, C39, C104, and C133.

It belongs to the complex I 20 kDa subunit family. In terms of assembly, NDH-1 is composed of 14 different subunits. Subunits NuoB, C, D, E, F, and G constitute the peripheral sector of the complex. Requires [4Fe-4S] cluster as cofactor.

It is found in the cell inner membrane. The catalysed reaction is a quinone + NADH + 5 H(+)(in) = a quinol + NAD(+) + 4 H(+)(out). In terms of biological role, NDH-1 shuttles electrons from NADH, via FMN and iron-sulfur (Fe-S) centers, to quinones in the respiratory chain. The immediate electron acceptor for the enzyme in this species is believed to be ubiquinone. Couples the redox reaction to proton translocation (for every two electrons transferred, four hydrogen ions are translocated across the cytoplasmic membrane), and thus conserves the redox energy in a proton gradient. The chain is NADH-quinone oxidoreductase subunit B from Protochlamydia amoebophila (strain UWE25).